The primary structure comprises 158 residues: Chromobox protein homolog 7 (158 aa).

The 59-residue stretch at 11–69 (FAVESIRKKRVRKGKVEYLVKWKGWPPKYSTWEPEEHILDPRLVMAYEEKEEKDRASGY) folds into the Chromo domain. Residues 60–124 (KEEKDRASGY…PPPWTPMLPS (65 aa)) form a disordered region. Positions 68-78 (GYRKRGPKPKR) are enriched in basic residues.

As to quaternary structure, component of a PRC1-like complex. Distinct PRC1-like core complexes are composed of a RING1 subunit (RING1B or RING1A), one of the six PCGF proteins (PCGF1-6), one PHC protein (PHC1-3) and one of the CBX proteins (CBX2, CBX4, CBX6, CBX7 or CBX8). The composition of the PRC1 complex may differ between the PRC1 complex in pluripotent embryonic stem cells containing RNF2, CBX7 and PCGF2, and the PRC1 complex in differentiating cells containing RNF2, CBX2, CBX4 and BMI1. Interacts with RING1. Interacts with RNF2/RING1B. Interacts with PCGF1, PCGF2, PCGF3, PCGF5 and PCGF6. Interacts (via chromodomain) with histone H3K9Me3 and H3K27me3. Interacts with H3K9Me2 and H4K20Me1. Interacts (via chromodomain) with single-stranded and double-stranded RNA; RNA binding seems to be required for the localization to chromatin.

The protein localises to the nucleus. It localises to the chromosome. Functionally, component of a Polycomb group (PcG) multiprotein PRC1-like complex, a complex class required to maintain the transcriptionally repressive state of many genes, including Hox genes, throughout development. PcG PRC1 complex acts via chromatin remodeling and modification of histones; it mediates monoubiquitination of histone H2A 'Lys-119', rendering chromatin heritably changed in its expressibility. Promotes histone H3 trimethylation at 'Lys-9' (H3K9me3). Binds to histone H3 trimethylated 'Lys-9' (H3K9me3) or at 'Lys-27' (H3K27me3). May possibly also bind trimethylated lysine residues in other proteins (in vitro). Binds non-coding, single-stranded and double-stranded RNA. Plays a role in the timely repression of differentiation-specific genes in pluripotent embryonic stem cells to maintain the undifferentiated state. Regulator of cellular lifespan by maintaining the repression of CDKN2A, but not by inducing telomerase activity. The protein is Chromobox protein homolog 7 (Cbx7) of Rattus norvegicus (Rat).